A 1049-amino-acid polypeptide reads, in one-letter code: Ataxin-2-like protein (1049 aa).

M1 carries the N-acetylmethionine modification. Positions 1–54 (MLKPQPPQQTSQPQQPPPTQQAVARRSPGGTSPPNGGLPGPLTATAAPPGPPAA) are disordered. A Phosphoserine modification is found at S27. T45 carries the phosphothreonine modification. The interaction with MPL stretch occupies residues 96 to 119 (SVRGQTTGKGPPQSPVFEGVYNNS). Phosphoserine is present on S109. Y116 is modified (phosphotyrosine). Positions 120–197 (RMLHFLTAVV…VLLVHFRNVD (78 aa)) constitute a Sm domain. At K205 the chain carries N6-acetyllysine. S236 carries the phosphoserine modification. Y262 is modified (phosphotyrosine). S304 is subject to Phosphoserine. The residue at position 307 (Y307) is a Phosphotyrosine. Positions 314-326 (ENDDGRTEEEKHS) are enriched in basic and acidic residues. Disordered stretches follow at residues 314–522 (ENDD…RNLE), 554–573 (QFKLQPSSSPETGLDPFPSR), 578–704 (EAKG…LTAG), 736–772 (VSNSVPGQQGKYRGAKGSLPPQRSDQHQPASAPPMMQ), 824–852 (SNPRMLTSGSHPQAIVSSSTPQYPAAEQP), 868–944 (HATQ…SSFP), and 999–1049 (PQGH…PPGN). Positions 328–340 (VQRQGSGRESPSL) are enriched in polar residues. 2 positions are modified to phosphoserine: S333 and S337. K346 is covalently cross-linked (Glycyl lysine isopeptide (Lys-Gly) (interchain with G-Cter in SUMO2)). Y347 is subject to Phosphotyrosine. The residue at position 359 (R359) is an Asymmetric dimethylarginine. A compositionally biased stretch (low complexity) spans 361 to 378 (GVRCSSSRGGRPGLSSLP). Phosphoserine occurs at positions 389, 407, and 453. A compositionally biased stretch (low complexity) spans 454 to 466 (PKSAAPAPVSASC). Residues 475-487 (VASSASIPVTSSV) show a composition bias toward polar residues. A phosphoserine mark is found at S496 and S499. The segment covering 508-519 (DVKELPTKEPSR) has biased composition (basic and acidic residues). S560, S561, and S562 each carry phosphoserine. Residues 578–587 (EAKGKEKEVD) show a composition bias toward basic and acidic residues. The residue at position 597 (S597) is a Phosphoserine. The residue at position 635 (T635) is a Phosphothreonine. S637, S677, S683, and S687 each carry phosphoserine. Positions 681-697 (STSTPTSPGPRTHSTPS) are enriched in low complexity. 2 stretches are compositionally biased toward polar residues: residues 824–845 (SNPRMLTSGSHPQAIVSSSTPQ) and 878–902 (QPATTPTGSQPQSQHAAPSPVQHQA). Low complexity predominate over residues 935-944 (SAQSPQSSFP). Over residues 1033-1042 (QVQSHPSQQL) the composition is skewed to polar residues.

This sequence belongs to the ataxin-2 family. In terms of assembly, interacts with MPL/TPOR and EPOR and dissociates after ligand stimulation. Interacts with DDX6, G3BP, and ATXN2. Interacts with PRMT1. Interacts with CIC and ATXN1. Post-translationally, thrombopoietin triggers the phosphorylation on tyrosine residues in a way that is dependent on MPL C-terminal domain. Asymmetrically dimethylated. Probably methylated by PRMT1. Expressed in cerebellum.

The protein localises to the membrane. It localises to the cytoplasm. Its subcellular location is the nucleus speckle. It is found in the cytoplasmic granule. Its function is as follows. Involved in the regulation of stress granule and P-body formation. In Mus musculus (Mouse), this protein is Ataxin-2-like protein (Atxn2l).